Reading from the N-terminus, the 145-residue chain is Maximins 3/H3 type 1 (145 aa).

Residues 1–18 (MNFKYIVAVSFLIASAYA) form the signal peptide. 2 consecutive propeptides follow at residues 19–43 (RSVQ…LREI) and 74–124 (RIAE…KEKR). An Isoleucine amide modification is found at isoleucine 144.

Belongs to the bombinin family. As to expression, expressed by the skin glands.

The protein resides in the secreted. Functionally, maximin-3 shows antibacterial activity against both Gram-positive and Gram-negative bacteria. It also shows antimicrobial activity against the fungus C.albicans, but not against A.flavus nor P.uticale. It has little hemolytic activity. It possess a significant cytotoxicity against tumor cell lines. It possess a significant anti-HIV activity. It shows high spermicidal activity. Its function is as follows. Maximin-H3 shows antibacterial activity against both Gram-positive and Gram-negative bacteria. It also shows antimicrobial activity against the fungus C.albicans. Shows strong hemolytic activity. The protein is Maximins 3/H3 type 1 of Bombina maxima (Giant fire-bellied toad).